A 106-amino-acid chain; its full sequence is MSAAKIKKGDKVVVLAGKDKGKRGEVLKAIPKEGRVVVQGVNVVKRHTRPTNTAAGGIVEKEASIHVSNVAHEDPKDGSPTRVGFKVLEDGRKVRYAKRSGDVIDG.

It belongs to the universal ribosomal protein uL24 family. As to quaternary structure, part of the 50S ribosomal subunit.

One of two assembly initiator proteins, it binds directly to the 5'-end of the 23S rRNA, where it nucleates assembly of the 50S subunit. Its function is as follows. One of the proteins that surrounds the polypeptide exit tunnel on the outside of the subunit. The chain is Large ribosomal subunit protein uL24 from Rhodospirillum rubrum (strain ATCC 11170 / ATH 1.1.1 / DSM 467 / LMG 4362 / NCIMB 8255 / S1).